Here is a 196-residue protein sequence, read N- to C-terminus: Putative NADH dehydrogenase/NAD(P)H nitroreductase XOO4023 (196 aa).

Belongs to the nitroreductase family. HadB/RutE subfamily. FMN is required as a cofactor.

The polypeptide is Putative NADH dehydrogenase/NAD(P)H nitroreductase XOO4023 (Xanthomonas oryzae pv. oryzae (strain MAFF 311018)).